Here is a 105-residue protein sequence, read N- to C-terminus: Small ribosomal subunit protein uS10 (105 aa).

The protein belongs to the universal ribosomal protein uS10 family. As to quaternary structure, part of the 30S ribosomal subunit.

In terms of biological role, involved in the binding of tRNA to the ribosomes. This is Small ribosomal subunit protein uS10 from Aster yellows witches'-broom phytoplasma (strain AYWB).